A 184-amino-acid polypeptide reads, in one-letter code: Endothelial cell-specific molecule 1 (184 aa).

The signal sequence occupies residues 1 to 21 (MKSLLLLTTLLIPLHLGMAWS). The 79-residue stretch at 24–102 (YAVDCPEHCD…GDEFGVCKDC (79 aa)) folds into the IGFBP N-terminal domain. 6 disulfides stabilise this stretch: Cys28–Cys51, Cys32–Cys53, Cys37–Cys54, Cys43–Cys57, Cys65–Cys83, and Cys77–Cys99. The segment at 145–184 (RTSASQTERDAASGDGNAVREEIGDRNAARPSVMKWLNPR) is disordered. Basic and acidic residues predominate over residues 151–172 (TERDAASGDGNAVREEIGDRNA). The O-linked (Xyl...) (chondroitin sulfate) serine glycan is linked to Ser157.

In terms of processing, O-glycosylated; contains chondroitin sulfate and dermatan sulfate. As to expression, pineal gland specific.

Its subcellular location is the secreted. Its function is as follows. Involved in angiogenesis; promotes angiogenic sprouting. May have potent implications in lung endothelial cell-leukocyte interactions. This is Endothelial cell-specific molecule 1 (Esm1) from Rattus norvegicus (Rat).